Reading from the N-terminus, the 42-residue chain is uncharacterized protein (42 aa).

Residues 18–38 form a helical membrane-spanning segment; that stretch reads VGAISLTVMMILFFIAIVWFL.

It localises to the host membrane. This is an uncharacterized protein from His1 virus (isolate Australia/Victoria) (His1V).